The following is a 372-amino-acid chain: NAD(P)H-quinone oxidoreductase subunit 1 (372 aa).

Transmembrane regions (helical) follow at residues Leu-27–Val-47, Leu-97–Ile-117, Val-128–Met-148, Leu-176–Val-196, Phe-204–Leu-224, Leu-270–Ala-290, Ser-308–Leu-328, and Ile-351–Gly-371.

Belongs to the complex I subunit 1 family. In terms of assembly, NDH-1 is composed of at least 11 different subunits.

Its subcellular location is the cellular thylakoid membrane. It catalyses the reaction a plastoquinone + NADH + (n+1) H(+)(in) = a plastoquinol + NAD(+) + n H(+)(out). The catalysed reaction is a plastoquinone + NADPH + (n+1) H(+)(in) = a plastoquinol + NADP(+) + n H(+)(out). Functionally, NDH-1 shuttles electrons from an unknown electron donor, via FMN and iron-sulfur (Fe-S) centers, to quinones in the respiratory and/or the photosynthetic chain. The immediate electron acceptor for the enzyme in this species is believed to be plastoquinone. Couples the redox reaction to proton translocation, and thus conserves the redox energy in a proton gradient. The chain is NAD(P)H-quinone oxidoreductase subunit 1 from Prochlorococcus marinus (strain SARG / CCMP1375 / SS120).